A 105-amino-acid chain; its full sequence is Putative zinc finger protein 861 (105 aa).

Residues 75–97 form a C2H2-type zinc finger; the sequence is YTCKPCGNAFRFHHSFHIHERPH.

In Homo sapiens (Human), this protein is Putative zinc finger protein 861 (ZNF861P).